Here is a 581-residue protein sequence, read N- to C-terminus: Leucine-rich repeat transmembrane neuronal protein 3 (581 aa).

The signal sequence occupies residues 1-30 (MGFNVIRLLSGSAVALVIAPTVLLTMLSSA). The 31-residue stretch at 31–61 (ERGCPKGCRCEGKMVYCESQKLQEIPSSISA) folds into the LRRNT domain. The Extracellular portion of the chain corresponds to 31–419 (ERGCPKGCRC…ADAEHISFHK (389 aa)). LRR repeat units follow at residues 63-83 (CLGL…QFKG), 86-107 (QLTW…AFNG), 110-131 (RLKE…TFRP), 134-155 (NLRN…QFRG), 158-179 (KLLS…IFQD), 182-203 (NLEL…VFAG), 206-226 (RLKE…ALFP), 230-251 (SLQN…MSWT), 254-275 (SLQR…SVFQ), and 279-300 (NLQR…ILDS). N-linked (GlcNAc...) asparagine glycosylation is present at Asn-126. Residues 312-363 (NIWECSRNICSLVNWLKSFKGLRENTIICASPKELQGVNVIDAVKNYSICGK) form the LRRCT domain. N-linked (GlcNAc...) asparagine glycosylation occurs at Asn-357. Residues 377–408 (KPTFKPKLPRPKHESKPPLPPTVGATEPGPET) are disordered. Residues 420-440 (IIAGSVALFLSVLVILLVIYV) traverse the membrane as a helical segment. Residues 441–581 (SWKRYPASMK…RISDHKQQLA (141 aa)) lie on the Cytoplasmic side of the membrane.

It belongs to the LRRTM family. As to expression, expressed in neuronal tissues.

The protein localises to the cell membrane. Its subcellular location is the postsynaptic cell membrane. Functionally, exhibits a limited synaptogenic activity in vitro, restricted to excitatory presynaptic differentiation. May play a role in the development and maintenance of the vertebrate nervous system. The protein is Leucine-rich repeat transmembrane neuronal protein 3 (LRRTM3) of Homo sapiens (Human).